Consider the following 468-residue polypeptide: Glutamate--tRNA ligase (468 aa).

Residues 11 to 21 carry the 'HIGH' region motif; sequence PSPTGFIHLGN. Residues 243–247 carry the 'KMSKS' region motif; that stretch reads KMSKR. Residue lysine 246 participates in ATP binding.

This sequence belongs to the class-I aminoacyl-tRNA synthetase family. Glutamate--tRNA ligase type 1 subfamily. In terms of assembly, monomer.

The protein localises to the cytoplasm. The catalysed reaction is tRNA(Glu) + L-glutamate + ATP = L-glutamyl-tRNA(Glu) + AMP + diphosphate. Catalyzes the attachment of glutamate to tRNA(Glu) in a two-step reaction: glutamate is first activated by ATP to form Glu-AMP and then transferred to the acceptor end of tRNA(Glu). This is Glutamate--tRNA ligase from Cupriavidus pinatubonensis (strain JMP 134 / LMG 1197) (Cupriavidus necator (strain JMP 134)).